The sequence spans 368 residues: SH3 domain-containing protein 2 (368 aa).

Coiled-coil stretches lie at residues 1-21 (MDAIRKQASRLREQVARQQQA) and 146-210 (LEDA…LGKE). Residues 1–264 (MDAIRKQASR…MVSERQRIEA (264 aa)) form the BAR domain. Positions 258–281 (ERQRIEAPSTPSSADSMPPPPSYE) are disordered. Residues 299–358 (MGYFLGEVLFPYHGVTDVELSLSTGEYVVVRKVTGSGWAEGECKGKAGWFPYGYIERRER) enclose the SH3 domain.

As to quaternary structure, homodimer. Interacts with FREE1. Interacts (via SH3 domain) with ATG8E and ATG8F. Component of a phosphoinositide 3-kinase (PI3K) complex containing ATG6, SH3P2 and FREE1. Binds to SH3P3 and DRP1A. Forms a complex made of SH3P2 and DRP1A and triggers its accumulation at the cell plate. As to expression, highly expressed in seedlings. Detected in flowers, leaves and stems.

The protein resides in the cytoplasm. It is found in the cytoplasmic vesicle. The protein localises to the clathrin-coated vesicle. Its subcellular location is the cell membrane. It localises to the late endosome. The protein resides in the autophagosome membrane. In terms of biological role, regulator for autophaosome formation and/or maturation. Binds phosphatidylinositol-phosphate; highest affinity for vesicles containing PtdIns(3,4,5)P(3), followed by those containing PtdIns(4,5)P(2) and PtdIns(3,4)P(2), with minimal binding to phosphatidylinositol monophosphates, including PtdIns(3)P. Together with DRP1A, converts the fused vesicles to tubular structures at the cell plate during cytokinesis. This chain is SH3 domain-containing protein 2, found in Arabidopsis thaliana (Mouse-ear cress).